Here is a 56-residue protein sequence, read N- to C-terminus: uncharacterized protein (56 aa).

This is an uncharacterized protein from Bacillus subtilis (strain 168).